The primary structure comprises 150 residues: Large ribosomal subunit protein uL15 (150 aa).

Residues 1–52 form a disordered region; that stretch reads MDLSNLKPAEGSVRKNSKRIGRGEGSGKGGTATRGHKGAKSRSGYSKKIGFE. The span at 23-32 shows a compositional bias: gly residues; that stretch reads GEGSGKGGTA.

The protein belongs to the universal ribosomal protein uL15 family. As to quaternary structure, part of the 50S ribosomal subunit.

Binds to the 23S rRNA. The protein is Large ribosomal subunit protein uL15 of Christiangramia forsetii (strain DSM 17595 / CGMCC 1.15422 / KT0803) (Gramella forsetii).